The chain runs to 454 residues: tRNA modification GTPase MnmE (454 aa).

The (6S)-5-formyl-5,6,7,8-tetrahydrofolate site is built by Arg-23, Glu-80, and Lys-120. The region spanning 216 to 377 is the TrmE-type G domain; sequence GMKVVIAGRP…LRNHLKQSMG (162 aa). Residue Asn-226 participates in K(+) binding. Residues 226–231, 245–251, 270–273, 335–338, and 358–360 each bind GTP; these read NAGKSS, TDIAGTT, DTAG, NKAD, and SAR. Mg(2+) is bound at residue Ser-230. The K(+) site is built by Thr-245, Ile-247, and Thr-250. Thr-251 lines the Mg(2+) pocket. Lys-454 serves as a coordination point for (6S)-5-formyl-5,6,7,8-tetrahydrofolate.

It belongs to the TRAFAC class TrmE-Era-EngA-EngB-Septin-like GTPase superfamily. TrmE GTPase family. As to quaternary structure, homodimer. Heterotetramer of two MnmE and two MnmG subunits. The cofactor is K(+).

The protein localises to the cytoplasm. Functionally, exhibits a very high intrinsic GTPase hydrolysis rate. Involved in the addition of a carboxymethylaminomethyl (cmnm) group at the wobble position (U34) of certain tRNAs, forming tRNA-cmnm(5)s(2)U34. This is tRNA modification GTPase MnmE from Klebsiella pneumoniae subsp. pneumoniae (strain ATCC 700721 / MGH 78578).